A 209-amino-acid chain; its full sequence is Na(+)-translocating NADH-quinone reductase subunit D (209 aa).

5 helical membrane-spanning segments follow: residues 42–62 (LVMT…ISLI), 66–86 (IPNS…VIVV), 103–123 (VFVG…AYAM), 131–151 (FMDG…VGFV), and 178–198 (NGLF…IWGL).

Belongs to the NqrDE/RnfAE family. In terms of assembly, composed of six subunits; NqrA, NqrB, NqrC, NqrD, NqrE and NqrF.

Its subcellular location is the cell inner membrane. It carries out the reaction a ubiquinone + n Na(+)(in) + NADH + H(+) = a ubiquinol + n Na(+)(out) + NAD(+). In terms of biological role, NQR complex catalyzes the reduction of ubiquinone-1 to ubiquinol by two successive reactions, coupled with the transport of Na(+) ions from the cytoplasm to the periplasm. NqrA to NqrE are probably involved in the second step, the conversion of ubisemiquinone to ubiquinol. The polypeptide is Na(+)-translocating NADH-quinone reductase subunit D (Yersinia pseudotuberculosis serotype O:1b (strain IP 31758)).